Reading from the N-terminus, the 376-residue chain is Glutamate 5-kinase (376 aa).

Lys-17 is an ATP binding site. Substrate contacts are provided by Ser-57, Asp-144, and Asn-156. 176–177 lines the ATP pocket; it reads TD. In terms of domain architecture, PUA spans 283–361; it reads KGQLVLDEGA…SEINQLLGYS (79 aa).

It belongs to the glutamate 5-kinase family.

The protein localises to the cytoplasm. The enzyme catalyses L-glutamate + ATP = L-glutamyl 5-phosphate + ADP. It participates in amino-acid biosynthesis; L-proline biosynthesis; L-glutamate 5-semialdehyde from L-glutamate: step 1/2. In terms of biological role, catalyzes the transfer of a phosphate group to glutamate to form L-glutamate 5-phosphate. This Hydrogenovibrio crunogenus (strain DSM 25203 / XCL-2) (Thiomicrospira crunogena) protein is Glutamate 5-kinase.